The chain runs to 64 residues: Neuropeptide-like 4 (64 aa).

A signal peptide spans 1–18 (MFKLLVVVFAALFAAALA). 2 consecutive propeptides follow at residues 19 to 40 (VPAPVARANPAPIPIASPEPAP) and 63 to 64 (YG).

The protein resides in the secreted. The polypeptide is Neuropeptide-like 4 (Nplp4) (Drosophila melanogaster (Fruit fly)).